The chain runs to 122 residues: Large ribosomal subunit protein uL14c (122 aa).

It belongs to the universal ribosomal protein uL14 family. In terms of assembly, part of the 50S ribosomal subunit.

The protein localises to the plastid. It is found in the chloroplast. In terms of biological role, binds to 23S rRNA. This Gracilaria tenuistipitata var. liui (Red alga) protein is Large ribosomal subunit protein uL14c.